A 206-amino-acid polypeptide reads, in one-letter code: N-(5'-phosphoribosyl)anthranilate isomerase (206 aa).

Belongs to the TrpF family.

The catalysed reaction is N-(5-phospho-beta-D-ribosyl)anthranilate = 1-(2-carboxyphenylamino)-1-deoxy-D-ribulose 5-phosphate. It functions in the pathway amino-acid biosynthesis; L-tryptophan biosynthesis; L-tryptophan from chorismate: step 3/5. This Pseudomonas putida (strain GB-1) protein is N-(5'-phosphoribosyl)anthranilate isomerase.